Consider the following 898-residue polypeptide: Alanine--tRNA ligase (898 aa).

Residues His-564, His-568, Cys-682, and His-686 each coordinate Zn(2+).

Belongs to the class-II aminoacyl-tRNA synthetase family. Zn(2+) is required as a cofactor.

The protein localises to the cytoplasm. The catalysed reaction is tRNA(Ala) + L-alanine + ATP = L-alanyl-tRNA(Ala) + AMP + diphosphate. Catalyzes the attachment of alanine to tRNA(Ala) in a two-step reaction: alanine is first activated by ATP to form Ala-AMP and then transferred to the acceptor end of tRNA(Ala). Also edits incorrectly charged Ser-tRNA(Ala) and Gly-tRNA(Ala) via its editing domain. The sequence is that of Alanine--tRNA ligase from Beijerinckia indica subsp. indica (strain ATCC 9039 / DSM 1715 / NCIMB 8712).